A 307-amino-acid chain; its full sequence is Cysteine synthase (307 aa).

K42 is modified (N6-(pyridoxal phosphate)lysine). Residues N72, 176–180 (GTGGH), and S263 each bind pyridoxal 5'-phosphate.

Belongs to the cysteine synthase/cystathionine beta-synthase family. Requires pyridoxal 5'-phosphate as cofactor.

The catalysed reaction is O-acetyl-L-serine + hydrogen sulfide = L-cysteine + acetate. The protein operates within amino-acid biosynthesis; L-cysteine biosynthesis; L-cysteine from L-serine: step 2/2. This Flavobacterium sp. (strain K3-15 / DSM ID92-509) protein is Cysteine synthase (cysK).